The sequence spans 630 residues: 1-deoxy-D-xylulose-5-phosphate synthase (630 aa).

Residues histidine 80 and 121–123 (GHS) contribute to the thiamine diphosphate site. Aspartate 152 contributes to the Mg(2+) binding site. Thiamine diphosphate contacts are provided by residues 153–154 (GA), asparagine 181, tyrosine 288, and glutamate 370. Asparagine 181 is a Mg(2+) binding site.

The protein belongs to the transketolase family. DXPS subfamily. As to quaternary structure, homodimer. The cofactor is Mg(2+). Thiamine diphosphate serves as cofactor.

It carries out the reaction D-glyceraldehyde 3-phosphate + pyruvate + H(+) = 1-deoxy-D-xylulose 5-phosphate + CO2. It participates in metabolic intermediate biosynthesis; 1-deoxy-D-xylulose 5-phosphate biosynthesis; 1-deoxy-D-xylulose 5-phosphate from D-glyceraldehyde 3-phosphate and pyruvate: step 1/1. Catalyzes the acyloin condensation reaction between C atoms 2 and 3 of pyruvate and glyceraldehyde 3-phosphate to yield 1-deoxy-D-xylulose-5-phosphate (DXP). The protein is 1-deoxy-D-xylulose-5-phosphate synthase of Colwellia psychrerythraea (strain 34H / ATCC BAA-681) (Vibrio psychroerythus).